A 513-amino-acid polypeptide reads, in one-letter code: ATP synthase subunit alpha (513 aa).

An ATP-binding site is contributed by 169–176 (GDRQCGKT).

It belongs to the ATPase alpha/beta chains family. As to quaternary structure, F-type ATPases have 2 components, CF(1) - the catalytic core - and CF(0) - the membrane proton channel. CF(1) has five subunits: alpha(3), beta(3), gamma(1), delta(1), epsilon(1). CF(0) has three main subunits: a(1), b(2) and c(9-12). The alpha and beta chains form an alternating ring which encloses part of the gamma chain. CF(1) is attached to CF(0) by a central stalk formed by the gamma and epsilon chains, while a peripheral stalk is formed by the delta and b chains.

It localises to the cell inner membrane. It carries out the reaction ATP + H2O + 4 H(+)(in) = ADP + phosphate + 5 H(+)(out). In terms of biological role, produces ATP from ADP in the presence of a proton gradient across the membrane. The alpha chain is a regulatory subunit. The protein is ATP synthase subunit alpha of Alteromonas mediterranea (strain DSM 17117 / CIP 110805 / LMG 28347 / Deep ecotype).